Consider the following 223-residue polypeptide: Small ribosomal subunit protein uS3 (223 aa).

Positions 38-106 (IKKYLKSKLA…EVHLNIVEIR (69 aa)) constitute a KH type-2 domain.

It belongs to the universal ribosomal protein uS3 family. Part of the 30S ribosomal subunit. Forms a tight complex with proteins S10 and S14.

Binds the lower part of the 30S subunit head. Binds mRNA in the 70S ribosome, positioning it for translation. The protein is Small ribosomal subunit protein uS3 of Rhodospirillum rubrum (strain ATCC 11170 / ATH 1.1.1 / DSM 467 / LMG 4362 / NCIMB 8255 / S1).